The chain runs to 259 residues: Hydroxyethylthiazole kinase 1 (259 aa).

M38 contacts substrate. 2 residues coordinate ATP: R113 and S158. Substrate is bound at residue G185.

Belongs to the Thz kinase family. The cofactor is Mg(2+).

It catalyses the reaction 5-(2-hydroxyethyl)-4-methylthiazole + ATP = 4-methyl-5-(2-phosphooxyethyl)-thiazole + ADP + H(+). Its pathway is cofactor biosynthesis; thiamine diphosphate biosynthesis; 4-methyl-5-(2-phosphoethyl)-thiazole from 5-(2-hydroxyethyl)-4-methylthiazole: step 1/1. Functionally, catalyzes the phosphorylation of the hydroxyl group of 4-methyl-5-beta-hydroxyethylthiazole (THZ). The polypeptide is Hydroxyethylthiazole kinase 1 (Leuconostoc mesenteroides subsp. mesenteroides (strain ATCC 8293 / DSM 20343 / BCRC 11652 / CCM 1803 / JCM 6124 / NCDO 523 / NBRC 100496 / NCIMB 8023 / NCTC 12954 / NRRL B-1118 / 37Y)).